Here is a 111-residue protein sequence, read N- to C-terminus: Large ribosomal subunit protein uL23 (111 aa).

The protein belongs to the universal ribosomal protein uL23 family. Part of the 50S ribosomal subunit. Contacts protein L29, and trigger factor when it is bound to the ribosome.

Functionally, one of the early assembly proteins it binds 23S rRNA. One of the proteins that surrounds the polypeptide exit tunnel on the outside of the ribosome. Forms the main docking site for trigger factor binding to the ribosome. The polypeptide is Large ribosomal subunit protein uL23 (Chlamydia felis (strain Fe/C-56) (Chlamydophila felis)).